The following is a 115-amino-acid chain: Cysteine-rich venom protein 5 (115 aa).

Positions M1 to G22 are cleaved as a signal peptide. 3 cysteine pairs are disulfide-bonded: C26–C41, C33–C44, and C40–C51. Residues R54–H115 are disordered. Basic residues-rich tracts occupy residues Q68 to K77 and N86 to H115.

As to expression, expressed by the venom gland.

Its subcellular location is the secreted. This chain is Cysteine-rich venom protein 5, found in Pimpla hypochondriaca (Parasitoid wasp).